Consider the following 449-residue polypeptide: MGSDVRDLNALLPAVPSLGGGGGCALPVSGAAEWAPVLDFAPPGASAYGSLGGPAPPPAPPPPPPPPPHSFIKQEPSWGGAEPHEEQCLSAFTVHFSGQFTGTAGACRYEPFGPPPPSQASSGQARMFPNAPYLPSCLESQPAIRNQGYSTVTFDGTPSYGHTPSHHAAQFPNHSFKHEDPMGQQGSLGEQQYSVPPPVYGCHTSTDSCTGSQALLLRTPYSSDNLYQMTSQLECMTWNQMNLGATLKGVAAGTSSSMKWTEGQSNHGAGYESDSHATPILCGAQYRIHTHGVFRGIQDVRRVPGVAPTLVRSASETSEKRPFMCAYPGCNKRYFKLSHLQMHSRKHTGEKPYQCDFKDCERRFSRSDQLKRHQRRHTGVKPFQCKTCQRKFSRSDHLKTHTRTHTGKTSEKPFSCRWPSCQKKFARSDELVRHHNMHQRNMSKLQLAL.

The tract at residues 48–84 (YGSLGGPAPPPAPPPPPPPPPHSFIKQEPSWGGAEPH) is disordered. A compositionally biased stretch (pro residues) spans 54–69 (PAPPPAPPPPPPPPPH). Glycyl lysine isopeptide (Lys-Gly) (interchain with G-Cter in SUMO) cross-links involve residues lysine 73 and lysine 177. Residues 236–244 (MTWNQMNLG) carry the 9aaTAD motif. 3 consecutive C2H2-type zinc fingers follow at residues 323–347 (FMCA…SRKH), 353–377 (YQCD…QRRH), and 383–405 (FQCK…TRTH). Important for interaction with target DNA stretches follow at residues 367–381 (SDQL…TGVK) and 393–401 (SRSDHLKTH). The short motif at 408 to 410 (KTS) is the KTS motif element. Residues 414–438 (FSCRWPSCQKKFARSDELVRHHNMH) form a C2H2-type 4 zinc finger. Residue lysine 444 forms a Glycyl lysine isopeptide (Lys-Gly) (interchain with G-Cter in SUMO2) linkage.

It belongs to the EGR C2H2-type zinc-finger protein family. In terms of assembly, interacts with ZNF224 via the zinc-finger region. Interacts with WTAP, AMER1 and SRY. Homodimer. Interacts with WTIP. Interacts with actively translating polysomes. Detected in nuclear ribonucleoprotein (mRNP) particles. Interacts with U2AF2. Interacts with HNRNPU via the zinc-finger region. Interacts with CITED2. Interacts with RBM4.

It is found in the nucleus speckle. The protein resides in the nucleus. The protein localises to the nucleoplasm. Its subcellular location is the nucleolus. It localises to the cytoplasm. Functionally, transcription factor that plays an important role in cellular development and cell survival. Recognizes and binds to the DNA sequence 5'-GCG(T/G)GGGCG-3'. Regulates the expression of numerous target genes, including EPO. Plays an essential role for development of the urogenital system. It has a tumor suppressor as well as an oncogenic role in tumor formation. Function may be isoform-specific: isoforms lacking the KTS motif may act as transcription factors. Isoforms containing the KTS motif may bind mRNA and play a role in mRNA metabolism or splicing. Isoform 1 has lower affinity for DNA, and can bind RNA. In Sus scrofa (Pig), this protein is Wilms tumor protein homolog (WT1).